Consider the following 146-residue polypeptide: Hemoglobin subunit beta (146 aa).

At valine 1 the chain carries N-acetylvaline. Positions 2 to 146 (HLTPDEKNAV…VANALAHKYH (145 aa)) constitute a Globin domain. A Phosphothreonine modification is found at threonine 12. Serine 44 carries the post-translational modification Phosphoserine. At lysine 59 the chain carries N6-acetyllysine. Histidine 63 contacts heme b. Lysine 82 is subject to N6-acetyllysine. Histidine 92 lines the heme b pocket. Cysteine 93 is modified (S-nitrosocysteine). At lysine 144 the chain carries N6-acetyllysine.

It belongs to the globin family. As to quaternary structure, heterotetramer of two alpha chains and two beta chains. In terms of tissue distribution, red blood cells.

Its function is as follows. Involved in oxygen transport from the lung to the various peripheral tissues. This is Hemoglobin subunit beta (HBB) from Piliocolobus badius (Western red colobus).